We begin with the raw amino-acid sequence, 157 residues long: Transcriptional repressor NrdR (157 aa).

Residues 3-34 (CPKCNSTHSRVVDSRHADEANAIRRRRECENC) fold into a zinc finger. Positions 49–139 (LIVVKKDGTR…VYKEFKDVDQ (91 aa)) constitute an ATP-cone domain.

This sequence belongs to the NrdR family. Requires Zn(2+) as cofactor.

Negatively regulates transcription of bacterial ribonucleotide reductase nrd genes and operons by binding to NrdR-boxes. This chain is Transcriptional repressor NrdR, found in Staphylococcus carnosus (strain TM300).